The chain runs to 862 residues: Protein translocase subunit SecA (862 aa).

ATP-binding positions include Q88, 106-110 (GEGKT), and D506. Residues C839, C841, C850, and H851 each contribute to the Zn(2+) site.

It belongs to the SecA family. As to quaternary structure, monomer and homodimer. Part of the essential Sec protein translocation apparatus which comprises SecA, SecYEG and auxiliary proteins SecDF-YajC and YidC. Zn(2+) serves as cofactor.

It is found in the cell inner membrane. It localises to the cytoplasm. It carries out the reaction ATP + H2O + cellular proteinSide 1 = ADP + phosphate + cellular proteinSide 2.. Functionally, part of the Sec protein translocase complex. Interacts with the SecYEG preprotein conducting channel. Has a central role in coupling the hydrolysis of ATP to the transfer of proteins into and across the cell membrane, serving as an ATP-driven molecular motor driving the stepwise translocation of polypeptide chains across the membrane. The protein is Protein translocase subunit SecA of Campylobacter jejuni (strain RM1221).